Reading from the N-terminus, the 602-residue chain is Elongation factor 4 (602 aa).

Residues 8–189 enclose the tr-type G domain; it reads KNIRNFSIIA…KIITTIPAPS (182 aa). GTP is bound by residues 20–25 and 136–139; these read DHGKST and NKID.

The protein belongs to the TRAFAC class translation factor GTPase superfamily. Classic translation factor GTPase family. LepA subfamily.

The protein resides in the cell inner membrane. The enzyme catalyses GTP + H2O = GDP + phosphate + H(+). Its function is as follows. Required for accurate and efficient protein synthesis under certain stress conditions. May act as a fidelity factor of the translation reaction, by catalyzing a one-codon backward translocation of tRNAs on improperly translocated ribosomes. Back-translocation proceeds from a post-translocation (POST) complex to a pre-translocation (PRE) complex, thus giving elongation factor G a second chance to translocate the tRNAs correctly. Binds to ribosomes in a GTP-dependent manner. The sequence is that of Elongation factor 4 from Helicobacter pylori (strain G27).